We begin with the raw amino-acid sequence, 213 residues long: High frequency lysogenization protein HflD homolog (213 aa).

The protein belongs to the HflD family.

Its subcellular location is the cytoplasm. The protein resides in the cell inner membrane. In Nitrosococcus oceani (strain ATCC 19707 / BCRC 17464 / JCM 30415 / NCIMB 11848 / C-107), this protein is High frequency lysogenization protein HflD homolog.